We begin with the raw amino-acid sequence, 505 residues long: 2,3-bisphosphoglycerate-independent phosphoglycerate mutase (505 aa).

Mn(2+) is bound by residues aspartate 12 and serine 62. Serine 62 acts as the Phosphoserine intermediate in catalysis. Substrate contacts are provided by residues histidine 123, 153 to 154 (RD), arginine 185, arginine 191, 257 to 260 (RPDR), and lysine 330. Mn(2+) contacts are provided by aspartate 397, histidine 401, aspartate 438, histidine 439, and histidine 456.

It belongs to the BPG-independent phosphoglycerate mutase family. As to quaternary structure, monomer. It depends on Mn(2+) as a cofactor.

It carries out the reaction (2R)-2-phosphoglycerate = (2R)-3-phosphoglycerate. It participates in carbohydrate degradation; glycolysis; pyruvate from D-glyceraldehyde 3-phosphate: step 3/5. Functionally, catalyzes the interconversion of 2-phosphoglycerate and 3-phosphoglycerate. The protein is 2,3-bisphosphoglycerate-independent phosphoglycerate mutase of Staphylococcus saprophyticus subsp. saprophyticus (strain ATCC 15305 / DSM 20229 / NCIMB 8711 / NCTC 7292 / S-41).